Consider the following 160-residue polypeptide: SsrA-binding protein (160 aa).

Belongs to the SmpB family.

The protein resides in the cytoplasm. In terms of biological role, required for rescue of stalled ribosomes mediated by trans-translation. Binds to transfer-messenger RNA (tmRNA), required for stable association of tmRNA with ribosomes. tmRNA and SmpB together mimic tRNA shape, replacing the anticodon stem-loop with SmpB. tmRNA is encoded by the ssrA gene; the 2 termini fold to resemble tRNA(Ala) and it encodes a 'tag peptide', a short internal open reading frame. During trans-translation Ala-aminoacylated tmRNA acts like a tRNA, entering the A-site of stalled ribosomes, displacing the stalled mRNA. The ribosome then switches to translate the ORF on the tmRNA; the nascent peptide is terminated with the 'tag peptide' encoded by the tmRNA and targeted for degradation. The ribosome is freed to recommence translation, which seems to be the essential function of trans-translation. This chain is SsrA-binding protein, found in Yersinia enterocolitica serotype O:8 / biotype 1B (strain NCTC 13174 / 8081).